The sequence spans 361 residues: Holliday junction branch migration complex subunit RuvB (361 aa).

Positions 1–12 (MNWDETGPETDE) are enriched in acidic residues. Residues 1–21 (MNWDETGPETDEPTGPVLDDR) form a disordered region. The interval 13 to 199 (PTGPVLDDRL…FGFTGHMEFY (187 aa)) is large ATPase domain (RuvB-L). ATP is bound by residues Leu-38, Arg-39, Gly-80, Lys-83, Thr-84, Thr-85, 146-148 (EDF), Arg-189, Tyr-199, and Arg-236. Mg(2+) is bound at residue Thr-84. Residues 200-270 (APAELERVLH…IAMAALKVYE (71 aa)) form a small ATPAse domain (RuvB-S) region. The interval 273–361 (ARGLDRLDRA…AKGQQGLFGA (89 aa)) is head domain (RuvB-H). Residues Arg-309, Arg-328, and Arg-333 each contribute to the DNA site.

Belongs to the RuvB family. Homohexamer. Forms an RuvA(8)-RuvB(12)-Holliday junction (HJ) complex. HJ DNA is sandwiched between 2 RuvA tetramers; dsDNA enters through RuvA and exits via RuvB. An RuvB hexamer assembles on each DNA strand where it exits the tetramer. Each RuvB hexamer is contacted by two RuvA subunits (via domain III) on 2 adjacent RuvB subunits; this complex drives branch migration. In the full resolvosome a probable DNA-RuvA(4)-RuvB(12)-RuvC(2) complex forms which resolves the HJ.

It localises to the cytoplasm. It carries out the reaction ATP + H2O = ADP + phosphate + H(+). Its function is as follows. The RuvA-RuvB-RuvC complex processes Holliday junction (HJ) DNA during genetic recombination and DNA repair, while the RuvA-RuvB complex plays an important role in the rescue of blocked DNA replication forks via replication fork reversal (RFR). RuvA specifically binds to HJ cruciform DNA, conferring on it an open structure. The RuvB hexamer acts as an ATP-dependent pump, pulling dsDNA into and through the RuvAB complex. RuvB forms 2 homohexamers on either side of HJ DNA bound by 1 or 2 RuvA tetramers; 4 subunits per hexamer contact DNA at a time. Coordinated motions by a converter formed by DNA-disengaged RuvB subunits stimulates ATP hydrolysis and nucleotide exchange. Immobilization of the converter enables RuvB to convert the ATP-contained energy into a lever motion, pulling 2 nucleotides of DNA out of the RuvA tetramer per ATP hydrolyzed, thus driving DNA branch migration. The RuvB motors rotate together with the DNA substrate, which together with the progressing nucleotide cycle form the mechanistic basis for DNA recombination by continuous HJ branch migration. Branch migration allows RuvC to scan DNA until it finds its consensus sequence, where it cleaves and resolves cruciform DNA. The protein is Holliday junction branch migration complex subunit RuvB of Streptomyces griseus subsp. griseus (strain JCM 4626 / CBS 651.72 / NBRC 13350 / KCC S-0626 / ISP 5235).